Here is a 328-residue protein sequence, read N- to C-terminus: Biotin synthase (328 aa).

The region spanning 48 to 275 (NRIQLSKLLN…KSHVRLTAGR (228 aa)) is the Radical SAM core domain. [4Fe-4S] cluster contacts are provided by cysteine 63, cysteine 67, and cysteine 70. [2Fe-2S] cluster-binding residues include cysteine 107, cysteine 138, cysteine 198, and arginine 270.

This sequence belongs to the radical SAM superfamily. Biotin synthase family. Homodimer. Requires [4Fe-4S] cluster as cofactor. The cofactor is [2Fe-2S] cluster.

It carries out the reaction (4R,5S)-dethiobiotin + (sulfur carrier)-SH + 2 reduced [2Fe-2S]-[ferredoxin] + 2 S-adenosyl-L-methionine = (sulfur carrier)-H + biotin + 2 5'-deoxyadenosine + 2 L-methionine + 2 oxidized [2Fe-2S]-[ferredoxin]. Its pathway is cofactor biosynthesis; biotin biosynthesis; biotin from 7,8-diaminononanoate: step 2/2. Its function is as follows. Catalyzes the conversion of dethiobiotin (DTB) to biotin by the insertion of a sulfur atom into dethiobiotin via a radical-based mechanism. This chain is Biotin synthase, found in Brucella abortus (strain S19).